Reading from the N-terminus, the 67-residue chain is Large ribosomal subunit protein bL35 (67 aa).

Belongs to the bacterial ribosomal protein bL35 family.

The polypeptide is Large ribosomal subunit protein bL35 (Leptospira borgpetersenii serovar Hardjo-bovis (strain JB197)).